A 177-amino-acid chain; its full sequence is Large ribosomal subunit protein uL6 (177 aa).

The protein belongs to the universal ribosomal protein uL6 family. As to quaternary structure, part of the 50S ribosomal subunit.

Its function is as follows. This protein binds to the 23S rRNA, and is important in its secondary structure. It is located near the subunit interface in the base of the L7/L12 stalk, and near the tRNA binding site of the peptidyltransferase center. In Histophilus somni (strain 2336) (Haemophilus somnus), this protein is Large ribosomal subunit protein uL6.